The chain runs to 336 residues: Palmitoyltransferase PFA3 (336 aa).

Residues 1 to 6 (MNDRLS) lie on the Cytoplasmic side of the membrane. The chain crosses the membrane as a helical span at residues 7-29 (LTSLFPRCLTTCLYIWTAYITLT). Residues 30–37 (RIHQIPRW) lie on the Vacuolar side of the membrane. The chain crosses the membrane as a helical span at residues 38 to 58 (FLALTIVPTLAVALYTYYKVI). Topologically, residues 59-147 (ARGPGSPLDF…AECTGFRNQK (89 aa)) are cytoplasmic. The DHHC domain maps to 104 to 154 (RVCQVCHVWKPDRCHHCSSCDVCILKMDHHCPWFAECTGFRNQKFFIQFLM). Residues 148–168 (FFIQFLMYTTLYAFLVLIYTC) traverse the membrane as a helical segment. The Vacuolar portion of the chain corresponds to 169–188 (YELGTWFNSGSFNRELIDFH). The helical transmembrane segment at 189–209 (LLGVALLAVAVFISVLAFTCF) threads the bilayer. Topologically, residues 210-336 (SIYQVCKNQT…RASVEIIDAN (127 aa)) are cytoplasmic.

Belongs to the DHHC palmitoyltransferase family. PFA3 subfamily. Post-translationally, autopalmitoylated.

It localises to the vacuole membrane. The catalysed reaction is L-cysteinyl-[protein] + hexadecanoyl-CoA = S-hexadecanoyl-L-cysteinyl-[protein] + CoA. Functionally, palmitoyltransferase specific for VAC8. Palmitoylates VAC8 at one or more of its N-terminal cysteine residues, which is required for its proper membrane localization. The sequence is that of Palmitoyltransferase PFA3 (PFA3) from Saccharomyces cerevisiae (strain ATCC 204508 / S288c) (Baker's yeast).